The chain runs to 378 residues: O-methyltransferase gsfD (378 aa).

S-adenosyl-L-methionine contacts are provided by residues Gly219–Gly220, Asp244, Asp266–Met267, and Arg282. The active-site Proton acceptor is His286.

The protein belongs to the class I-like SAM-binding methyltransferase superfamily. Cation-independent O-methyltransferase family.

The enzyme catalyses desmethyl-dehydrogriseofulvin + S-adenosyl-L-methionine = dehydrogriseofulvin + S-adenosyl-L-homocysteine + H(+). Its pathway is secondary metabolite biosynthesis; terpenoid biosynthesis. Functionally, O-methyltransferase; part of the gene cluster that mediates the biosynthesis of griseofulvin, an important antifungal drug that has been in use for a long time for treating dermatophyte infections. The first step of the pathway is the formation of the heptaketide backbone by gsfA which is initiated by priming with acetyl-CoA, followed by sequential condensations of 6 malonyl-CoA units. The resulting benzophenone can undergo a spontaneous dehydration to form norlichexanthone. However, the true precursor for the griseofulvin biosynthesis is not norlichexanthone, but the heptaketide benzophenone that is O-methylated at 3-OH by gsfB to produce griseophenone D which is further methylated at 9-OH by gsfC to yield griseophenone C. Griseophenone C is then substrate of halogenase gsfI which is responsible for the regio-specific chlorination at the C13 position to form griseophenone B. The cytochrome P450 gsfF catalyzes the coupling of orcinol and phloroglucinol rings in griseophenone B to form desmethyl-dehydrogriseofulvin A which is further methylated at 5-OH by gsfD to yield dehydrogriseofulvin. Finally, gsfE performs stereospecific reduction of enone 18 of dehydrogriseofulvin to afford the final product griseofulvin. The sequence is that of O-methyltransferase gsfD from Penicillium aethiopicum.